We begin with the raw amino-acid sequence, 379 residues long: 23S rRNA (uracil(747)-C(5))-methyltransferase RlmC (379 aa).

Cys-3, Cys-11, Cys-14, and Cys-87 together coordinate [4Fe-4S] cluster. Positions 212, 241, 262, and 309 each coordinate S-adenosyl-L-methionine. Cys-336 serves as the catalytic Nucleophile.

It belongs to the class I-like SAM-binding methyltransferase superfamily. RNA M5U methyltransferase family. RlmC subfamily.

The catalysed reaction is uridine(747) in 23S rRNA + S-adenosyl-L-methionine = 5-methyluridine(747) in 23S rRNA + S-adenosyl-L-homocysteine + H(+). Functionally, catalyzes the formation of 5-methyl-uridine at position 747 (m5U747) in 23S rRNA. In Shewanella loihica (strain ATCC BAA-1088 / PV-4), this protein is 23S rRNA (uracil(747)-C(5))-methyltransferase RlmC.